A 201-amino-acid chain; its full sequence is Recombination protein RecR (201 aa).

A C4-type zinc finger spans residues 57–72; it reads CRDCRTFTEQEVCTIC. Positions 81 to 176 constitute a Toprim domain; it reads GQICVVESPA…LASRIAHGVP (96 aa).

This sequence belongs to the RecR family.

May play a role in DNA repair. It seems to be involved in an RecBC-independent recombinational process of DNA repair. It may act with RecF and RecO. This chain is Recombination protein RecR, found in Edwardsiella ictaluri (strain 93-146).